A 306-amino-acid chain; its full sequence is Ribonuclease BN (306 aa).

Positions 64, 66, 68, 69, 141, 212, and 270 each coordinate Zn(2+). The Proton acceptor role is filled by Asp-68.

This sequence belongs to the RNase Z family. RNase BN subfamily. In terms of assembly, homodimer. Zn(2+) is required as a cofactor.

In terms of biological role, zinc phosphodiesterase, which has both exoribonuclease and endoribonuclease activities. This is Ribonuclease BN from Klebsiella pneumoniae (strain 342).